Reading from the N-terminus, the 139-residue chain is Natriuretic peptide Mf-NP (139 aa).

Positions 1–25 are cleaved as a signal peptide; sequence MVGLSRLTGGGLLLVLALLPLALDG. Residues 26 to 75 constitute a propeptide that is removed on maturation; sequence KPLEEAPTAPSRIIPFSRPVRKESQAVLDPMVHPERPAGSGDDGDLSRLE. C86 and C102 form a disulfide bridge. Positions 117-139 are excised as a propeptide; sequence IIPFSRPVRKESRAALDRMQHPG.

This sequence belongs to the natriuretic peptide family. As to expression, expressed by the venom gland.

Its subcellular location is the secreted. Functionally, natriuretic peptide that dose-dependently induces the rapid relaxation of rat aortic strips phenylephrine-precontracted. Acts by stimulating cGMP production in a dose-dependent manner (by probably activating NPR1 and/or NPR2). May also show potent hypotensive effects. The chain is Natriuretic peptide Mf-NP from Micrurus fulvius (Eastern coral snake).